Reading from the N-terminus, the 342-residue chain is Replication factor C subunit 3 (342 aa).

An ATP-binding site is contributed by 63-70; sequence GPPGTGKT.

The protein belongs to the activator 1 small subunits family. In terms of assembly, heteropentamer of subunits rfc1, rfc2, rfc3, rfc4 and rfc5 that forms a complex (RFC) with PCNA in the presence of ATP. Two other complexes exist where rfc1 can be replaced by either ctf18 or elg1 to form the ctf18-RFC or the elg1-RFC complexes respectively.

It localises to the nucleus. Its function is as follows. The elongation of primed DNA templates by DNA polymerase delta and epsilon requires the action of the accessory proteins PCNA and activator 1. Subunit 3 binds ATP. Also involved in replication and DNA damage checkpoint controls, probably functioning as a checkpoint sensor. The sequence is that of Replication factor C subunit 3 (rfc3) from Schizosaccharomyces pombe (strain 972 / ATCC 24843) (Fission yeast).